Reading from the N-terminus, the 274-residue chain is Protein YehF (274 aa).

Residues 2 to 78 (RHFIYQDEKS…KDNSLQPSQT (77 aa)) enclose the WGR domain.

Has been implicated in selenate reduction; a mini-Tn10 insertion mutant in 'molR', (which was mapped to 47.3 centisomes i.e. this locus), is defective in the reduction of selenate. In Escherichia coli (strain K12), this protein is Protein YehF (yehF).